The chain runs to 758 residues: Maturase-like protein 2 (758 aa).

Its subcellular location is the plastid. It localises to the chloroplast. The sequence is that of Maturase-like protein 2 (mat2) from Euglena gracilis.